A 379-amino-acid chain; its full sequence is Cytoplasmic tRNA 2-thiolation protein 1 (379 aa).

This sequence belongs to the TtcA family. CTU1/NCS6/ATPBD3 subfamily.

Its subcellular location is the cytoplasm. The protein operates within tRNA modification; 5-methoxycarbonylmethyl-2-thiouridine-tRNA biosynthesis. Functionally, plays a central role in 2-thiolation of mcm(5)S(2)U at tRNA wobble positions of tRNA(Lys), tRNA(Glu) and tRNA(Gln). Directly binds tRNAs and probably acts by catalyzing adenylation of tRNAs, an intermediate required for 2-thiolation. It is unclear whether it acts as a sulfurtransferase that transfers sulfur from thiocarboxylated URM1 onto the uridine of tRNAs at wobble position. Prior mcm(5) tRNA modification by the elongator complex is required for 2-thiolation. May also be involved in protein urmylation. This Lodderomyces elongisporus (strain ATCC 11503 / CBS 2605 / JCM 1781 / NBRC 1676 / NRRL YB-4239) (Yeast) protein is Cytoplasmic tRNA 2-thiolation protein 1.